Here is a 319-residue protein sequence, read N- to C-terminus: Probable deoxyhypusine synthase (319 aa).

The Nucleophile role is filled by K287.

Belongs to the deoxyhypusine synthase family. It depends on NAD(+) as a cofactor.

The catalysed reaction is [eIF5A protein]-L-lysine + spermidine = [eIF5A protein]-deoxyhypusine + propane-1,3-diamine. Its pathway is protein modification; eIF5A hypusination. Catalyzes the NAD-dependent oxidative cleavage of spermidine and the subsequent transfer of the butylamine moiety of spermidine to the epsilon-amino group of a specific lysine residue of the eIF-5A precursor protein to form the intermediate deoxyhypusine residue. This is Probable deoxyhypusine synthase from Ignicoccus hospitalis (strain KIN4/I / DSM 18386 / JCM 14125).